Here is a 705-residue protein sequence, read N- to C-terminus: Elongation factor G (705 aa).

Residues 8-290 (HRYRNIGIMA…GVIHLLPSPA (283 aa)) form the tr-type G domain. Residues 17-24 (AHIDAGKT), 88-92 (DTPGH), and 142-145 (NKMD) each bind GTP.

This sequence belongs to the TRAFAC class translation factor GTPase superfamily. Classic translation factor GTPase family. EF-G/EF-2 subfamily.

It localises to the cytoplasm. Its function is as follows. Catalyzes the GTP-dependent ribosomal translocation step during translation elongation. During this step, the ribosome changes from the pre-translocational (PRE) to the post-translocational (POST) state as the newly formed A-site-bound peptidyl-tRNA and P-site-bound deacylated tRNA move to the P and E sites, respectively. Catalyzes the coordinated movement of the two tRNA molecules, the mRNA and conformational changes in the ribosome. The sequence is that of Elongation factor G from Xylella fastidiosa (strain M23).